A 244-amino-acid chain; its full sequence is 7-cyano-7-deazaguanine synthase (244 aa).

ATP is bound at residue 14-24 (FSGGQDSATCV). Positions 202, 217, 220, and 223 each coordinate Zn(2+).

The protein belongs to the QueC family. It depends on Zn(2+) as a cofactor.

The enzyme catalyses 7-carboxy-7-deazaguanine + NH4(+) + ATP = 7-cyano-7-deazaguanine + ADP + phosphate + H2O + H(+). Its pathway is purine metabolism; 7-cyano-7-deazaguanine biosynthesis. Its function is as follows. Catalyzes the ATP-dependent conversion of 7-carboxy-7-deazaguanine (CDG) to 7-cyano-7-deazaguanine (preQ(0)). This Burkholderia mallei (strain NCTC 10229) protein is 7-cyano-7-deazaguanine synthase.